The primary structure comprises 99 residues: Small ribosomal subunit protein bS18 (99 aa).

Residues 1–25 (MAESKGRPGSASQRPTGGDKAIAGQ) are disordered.

It belongs to the bacterial ribosomal protein bS18 family. As to quaternary structure, part of the 30S ribosomal subunit. Forms a tight heterodimer with protein bS6.

Its function is as follows. Binds as a heterodimer with protein bS6 to the central domain of the 16S rRNA, where it helps stabilize the platform of the 30S subunit. The chain is Small ribosomal subunit protein bS18 from Solibacter usitatus (strain Ellin6076).